A 207-amino-acid chain; its full sequence is Imidazole glycerol phosphate synthase subunit HisH (207 aa).

Residues 1-207 (MIAIVDYNMG…ENFTKYRNLK (207 aa)) enclose the Glutamine amidotransferase type-1 domain. Cysteine 79 (nucleophile) is an active-site residue. Active-site residues include histidine 185 and glutamate 187.

As to quaternary structure, heterodimer of HisH and HisF.

The protein resides in the cytoplasm. It catalyses the reaction 5-[(5-phospho-1-deoxy-D-ribulos-1-ylimino)methylamino]-1-(5-phospho-beta-D-ribosyl)imidazole-4-carboxamide + L-glutamine = D-erythro-1-(imidazol-4-yl)glycerol 3-phosphate + 5-amino-1-(5-phospho-beta-D-ribosyl)imidazole-4-carboxamide + L-glutamate + H(+). The catalysed reaction is L-glutamine + H2O = L-glutamate + NH4(+). It participates in amino-acid biosynthesis; L-histidine biosynthesis; L-histidine from 5-phospho-alpha-D-ribose 1-diphosphate: step 5/9. Its function is as follows. IGPS catalyzes the conversion of PRFAR and glutamine to IGP, AICAR and glutamate. The HisH subunit catalyzes the hydrolysis of glutamine to glutamate and ammonia as part of the synthesis of IGP and AICAR. The resulting ammonia molecule is channeled to the active site of HisF. The polypeptide is Imidazole glycerol phosphate synthase subunit HisH (Sulfurimonas denitrificans (strain ATCC 33889 / DSM 1251) (Thiomicrospira denitrificans (strain ATCC 33889 / DSM 1251))).